The sequence spans 416 residues: Serine hydroxymethyltransferase (416 aa).

(6S)-5,6,7,8-tetrahydrofolate is bound by residues L121 and G125 to L127. K230 bears the N6-(pyridoxal phosphate)lysine mark. S354–F356 is a binding site for (6S)-5,6,7,8-tetrahydrofolate.

It belongs to the SHMT family. Homodimer. The cofactor is pyridoxal 5'-phosphate.

Its subcellular location is the cytoplasm. The enzyme catalyses (6R)-5,10-methylene-5,6,7,8-tetrahydrofolate + glycine + H2O = (6S)-5,6,7,8-tetrahydrofolate + L-serine. Its pathway is one-carbon metabolism; tetrahydrofolate interconversion. It functions in the pathway amino-acid biosynthesis; glycine biosynthesis; glycine from L-serine: step 1/1. Its function is as follows. Catalyzes the reversible interconversion of serine and glycine with tetrahydrofolate (THF) serving as the one-carbon carrier. This reaction serves as the major source of one-carbon groups required for the biosynthesis of purines, thymidylate, methionine, and other important biomolecules. Also exhibits THF-independent aldolase activity toward beta-hydroxyamino acids, producing glycine and aldehydes, via a retro-aldol mechanism. The polypeptide is Serine hydroxymethyltransferase (Prochlorococcus marinus (strain MIT 9211)).